The following is a 343-amino-acid chain: Dihydroorotase (343 aa).

Zn(2+) contacts are provided by histidine 14 and histidine 16. Residues 16-18 and asparagine 42 contribute to the substrate site; that span reads HLR. Residues lysine 97, histidine 136, histidine 170, and aspartate 242 each contribute to the Zn(2+) site. Position 97 is an N6-carboxylysine (lysine 97). Histidine 136 is a substrate binding site. The active site involves aspartate 242. Substrate-binding residues include histidine 246 and alanine 258.

It belongs to the metallo-dependent hydrolases superfamily. DHOase family. Class II DHOase subfamily. As to quaternary structure, homodimer. The cofactor is Zn(2+).

It carries out the reaction (S)-dihydroorotate + H2O = N-carbamoyl-L-aspartate + H(+). It functions in the pathway pyrimidine metabolism; UMP biosynthesis via de novo pathway; (S)-dihydroorotate from bicarbonate: step 3/3. Catalyzes the reversible cyclization of carbamoyl aspartate to dihydroorotate. The protein is Dihydroorotase of Helicobacter hepaticus (strain ATCC 51449 / 3B1).